Consider the following 208-residue polypeptide: Riboflavin synthase (208 aa).

Lumazine-binding repeat units lie at residues 1–97 (MFTG…MGGH) and 98–195 (IISG…VDTT). 2,4-dihydroxypteridine-binding positions include 4–6 (GIV), 48–50 (CLT), 62–67 (DIMKIT), 101–103 (GHI), lysine 137, 146–148 (SLT), and 160–165 (SIIPET).

As to quaternary structure, homotrimer.

It catalyses the reaction 2 6,7-dimethyl-8-(1-D-ribityl)lumazine + H(+) = 5-amino-6-(D-ribitylamino)uracil + riboflavin. It participates in cofactor biosynthesis; riboflavin biosynthesis; riboflavin from 2-hydroxy-3-oxobutyl phosphate and 5-amino-6-(D-ribitylamino)uracil: step 2/2. Its function is as follows. Catalyzes the dismutation of two molecules of 6,7-dimethyl-8-ribityllumazine, resulting in the formation of riboflavin and 5-amino-6-(D-ribitylamino)uracil. The protein is Riboflavin synthase (ribE) of Buchnera aphidicola subsp. Schizaphis graminum (strain Sg).